A 271-amino-acid polypeptide reads, in one-letter code: MIIIGEKLNGAIPVVKKAIEEKDEAFIRDRAIAQAEAGATYIDVCAGTAPEIELESLKWMMDIVQEAVETPLCIDSPDPEILKAVFPLCKKPGLVNSVSGEGNKMDVLLPLFDDADPTWELVAMTCDNAGIPNTVEKKVELTKMMVEEAKKHNLTPNRIHIDPCVMALSTENHSFLNFKAEIEGIREIYPDIHITSGLSNISFGLPARKLMNQNFMTLSMFVGMDSAVMDPTSRDMMGAIFATDALLGNDRLCRKYSKAFRQGKIGPVQAK.

In terms of domain architecture, Pterin-binding spans 1–247 (MIIIGEKLNG…GAIFATDALL (247 aa)).

The protein belongs to the vitamin-B12 dependent methionine synthase family. The proline betaine:THF methyl transfer system is composed of two methyltransferases, MtpB and MtqA, and the corrinoid protein MtqC. The L-carnitine:THF methyl transfer system is composed of two methyltransferases, MtcB and MtqA, and the corrinoid protein MtqC.

The enzyme catalyses methyl-Co(III)-[quaternary-amine-specific corrinoid protein] + (6S)-5,6,7,8-tetrahydrofolate = Co(I)-[quaternary-amine-specific corrinoid protein] + (6S)-5-methyl-5,6,7,8-tetrahydrofolate + H(+). Its function is as follows. Involved in the degradation of the quaternary amines L-proline betaine and L-carnitine. Component of a corrinoid-dependent methyltransferase system that transfers a methyl group from L-proline betaine or L-carnitine to tetrahydrofolate (THF), forming methyl-THF, a key intermediate in the Wood-Ljungdahl acetogenesis pathway. MtqA catalyzes the transfer of a methyl group from the methylated corrinoid protein MtqC to THF, forming methyl-THF. The polypeptide is Methylcorrinoid:tetrahydrofolate methyltransferase (Eubacterium limosum).